Here is a 368-residue protein sequence, read N- to C-terminus: 3-isopropylmalate dehydrogenase (368 aa).

Position 79–91 (79–91 (GPEWGTSSTVRPE)) interacts with NAD(+). Substrate-binding residues include R98, R108, R137, and D226. Residues D226, D251, and D255 each contribute to the Mg(2+) site. Residue 291–303 (GSAPDISGKGIVN) coordinates NAD(+).

This sequence belongs to the isocitrate and isopropylmalate dehydrogenases family. As to quaternary structure, homodimer. Mg(2+) serves as cofactor. Mn(2+) is required as a cofactor.

It is found in the cytoplasm. The catalysed reaction is (2R,3S)-3-isopropylmalate + NAD(+) = 4-methyl-2-oxopentanoate + CO2 + NADH. The protein operates within amino-acid biosynthesis; L-leucine biosynthesis; L-leucine from 3-methyl-2-oxobutanoate: step 3/4. Functionally, catalyzes the oxidation of 3-carboxy-2-hydroxy-4-methylpentanoate (3-isopropylmalate) to 3-carboxy-4-methyl-2-oxopentanoate. The product decarboxylates to 4-methyl-2 oxopentanoate. This chain is 3-isopropylmalate dehydrogenase (leu-1), found in Neurospora crassa (strain ATCC 24698 / 74-OR23-1A / CBS 708.71 / DSM 1257 / FGSC 987).